We begin with the raw amino-acid sequence, 297 residues long: Beta-glucoside kinase (297 aa).

5 to 11 (AFDIGGT) provides a ligand contact to ATP.

It belongs to the ROK (NagC/XylR) family. In terms of assembly, homotetramer.

It carries out the reaction D-cellobiose + ATP = 6-phospho-beta-D-glucosyl-(1-&gt;4)-D-glucose + ADP + H(+). Is inhibited by N-ethylmaleimide in vitro, but ATP affords considerable protection against the inhibitor. In terms of biological role, catalyzes the ATP-dependent phosphorylation of a wide variety of beta-D-glucosides, to produce 6-phospho-beta-D-glucosides including cellobiose-6'-P, gentiobiose-6'-P, cellobiitol-6-P, salicin-6-P, and arbutin-6-P. Is not able to phosphorylate alpha-D-glucosides. May have a dual role of kinase and transcriptional regulator of the cellobiose-PTS operon. The sequence is that of Beta-glucoside kinase (bglK) from Klebsiella pneumoniae.